The sequence spans 114 residues: MNNQSAKAVVKIQRISPRKARLVADLFRGKDVKVALGILNNTNKKASQLFIKLLNSAIANATNNHGMDASKLFVKEVLVNEGPTLKRYQPRSQGRAYSIFKRTSNLSITLEERV.

Belongs to the universal ribosomal protein uL22 family. As to quaternary structure, part of the 50S ribosomal subunit.

This protein binds specifically to 23S rRNA; its binding is stimulated by other ribosomal proteins, e.g. L4, L17, and L20. It is important during the early stages of 50S assembly. It makes multiple contacts with different domains of the 23S rRNA in the assembled 50S subunit and ribosome. Functionally, the globular domain of the protein is located near the polypeptide exit tunnel on the outside of the subunit, while an extended beta-hairpin is found that lines the wall of the exit tunnel in the center of the 70S ribosome. This Mycoplasmopsis agalactiae (strain NCTC 10123 / CIP 59.7 / PG2) (Mycoplasma agalactiae) protein is Large ribosomal subunit protein uL22.